The primary structure comprises 159 residues: Small ribosomal subunit protein uS17y (159 aa).

The protein belongs to the universal ribosomal protein uS17 family.

Its subcellular location is the cytoplasm. The chain is Small ribosomal subunit protein uS17y (RPS11B) from Arabidopsis thaliana (Mouse-ear cress).